Here is a 270-residue protein sequence, read N- to C-terminus: Glucosamine-6-phosphate deaminase (270 aa).

Aspartate 72 functions as the Proton acceptor; for enolization step in the catalytic mechanism. Aspartate 141 serves as the catalytic For ring-opening step. The active-site Proton acceptor; for ring-opening step is histidine 143. Residue glutamate 148 is the For ring-opening step of the active site.

This sequence belongs to the glucosamine/galactosamine-6-phosphate isomerase family. NagB subfamily.

The enzyme catalyses alpha-D-glucosamine 6-phosphate + H2O = beta-D-fructose 6-phosphate + NH4(+). It functions in the pathway amino-sugar metabolism; N-acetylneuraminate degradation; D-fructose 6-phosphate from N-acetylneuraminate: step 5/5. Its activity is regulated as follows. Allosterically activated by N-acetylglucosamine 6-phosphate (GlcNAc6P). In terms of biological role, catalyzes the reversible isomerization-deamination of glucosamine 6-phosphate (GlcN6P) to form fructose 6-phosphate (Fru6P) and ammonium ion. The polypeptide is Glucosamine-6-phosphate deaminase (Parabacteroides distasonis (strain ATCC 8503 / DSM 20701 / CIP 104284 / JCM 5825 / NCTC 11152)).